The primary structure comprises 653 residues: DNA polymerase (653 aa).

The protein belongs to the DNA polymerase type-B family.

It carries out the reaction DNA(n) + a 2'-deoxyribonucleoside 5'-triphosphate = DNA(n+1) + diphosphate. Functionally, replicates viral genomic DNA. This is DNA polymerase from Acidianus convivator (ABV).